A 662-amino-acid polypeptide reads, in one-letter code: MNFPWDQLLVKGNWMITMAQIGAPFLVIGLIAVITYFKLWKYLYKEWFTSVDHKKIGLMYLICAVLMFVRGGIDALLLRTQLTIPDNTFLESNHYNEIFSTHGVIMIIFMAMPFVFGLWNVVVPLQIGARDVAFPVMNNISFWLFFVGMILFNLSFIIGGSPAAGWTNYAPLAGEFSPGPGVNYYLVAIQISGIGTLMTGINFFVTILRCKTPTMKFMQMPMFTVTTFITTLIVILAFPVFTVVLALMTFDRVFGTAFFTVADGGMPMLWANFFWVWGHPEVYIVILPAFGIYSEIIPTFARKRLFGHQSMVWATAGIAFLSFLVWVHHFFTMGNGALINSFFSISTMLIGVPTGVKLFNWLLTLYKGRITFESPMLFSLAFIPNFLLGGVTGVMLAMASADYQYHNTYFLVAHFHYTLVTGVVFACLAGLIFWYPKMMGYKLNEKLNAWCFWLFMIGFNVCFLPQFILGLDGMPRRLYTYMPSDGWWLLNVISTIGALLMAVGFLFLVVSIVYSHIKAPREATGDNWDGLGRTLEWSTASAIPPKYNFAITPDWNDYDTFVDMKEHGRHYLDNHNYKDIHMPNNTHTGVIMGIFMLLGGFFLIFETVIPAAICLVGILGSLVYQSFVQDHGYHIPASEVAENEARLREARIKEREAVGHES.

2 consecutive transmembrane segments (helical) span residues 14–34 (WMITMAQIGAPFLVIGLIAVI) and 58–78 (LMYLICAVLMFVRGGIDALLL). His-102 provides a ligand contact to Fe(II)-heme a. 8 helical membrane-spanning segments follow: residues 103 to 123 (GVIMIIFMAMPFVFGLWNVVV), 140 to 160 (ISFWLFFVGMILFNLSFIIGG), 187 to 207 (VAIQISGIGTLMTGINFFVTI), 228 to 248 (FITTLIVILAFPVFTVVLALM), 273 to 293 (FFWVWGHPEVYIVILPAFGIY), 311 to 331 (MVWATAGIAFLSFLVWVHHFF), 336 to 356 (GALINSFFSISTMLIGVPTGV), and 376 to 396 (MLFSLAFIPNFLLGGVTGVML). His-279, Tyr-283, His-328, and His-329 together coordinate Cu cation. Residues 279–283 (HPEVY) constitute a cross-link (1'-histidyl-3'-tyrosine (His-Tyr)). Residue His-414 participates in heme a3 binding. The next 5 helical transmembrane spans lie at 415–435 (FHYTLVTGVVFACLAGLIFWY), 451–471 (CFWLFMIGFNVCFLPQFILGL), 492–512 (VISTIGALLMAVGFLFLVVSI), 586–605 (THTGVIMGIFMLLGGFFLIF), and 609–628 (IPAAICLVGILGSLVYQSFV). Position 416 (His-416) interacts with Fe(II)-heme a.

This sequence belongs to the heme-copper respiratory oxidase family. Requires Cu cation as cofactor. The cofactor is ferriheme a. Heme A3. is required as a cofactor.

It localises to the cell membrane. The catalysed reaction is 2 a quinol + O2 = 2 a quinone + 2 H2O. It participates in energy metabolism; oxidative phosphorylation. In terms of biological role, catalyzes quinol oxidation with the concomitant reduction of oxygen to water. The protein is Probable quinol oxidase subunit 1 (qoxB) of Staphylococcus haemolyticus (strain JCSC1435).